A 105-amino-acid chain; its full sequence is Blood plasma apolipoprotein LAL1 (105 aa).

Residues 1-21 (MKLHVAALATLAVVCILAAGS) form the signal peptide. A propeptide spanning residues 22-29 (EAAPKAMS) is cleaved from the precursor.

As to expression, plasma.

The protein localises to the secreted. This Petromyzon marinus (Sea lamprey) protein is Blood plasma apolipoprotein LAL1.